We begin with the raw amino-acid sequence, 322 residues long: CMP-sialic acid transporter 1 (322 aa).

The Cytoplasmic segment spans residues 1 to 2 (MQ). The chain crosses the membrane as a helical span at residues 3–23 (WYLVAALLTVLTSSQGILTTL). The Lumenal segment spans residues 24-33 (SQSNGKYKYD). Residues 34–54 (YATIPFLAELFKLSFSSFFLW) traverse the membrane as a helical segment. The Cytoplasmic segment spans residues 55–75 (KECQSSSPPRMTKEWRSIRLY). Residues 76–96 (LVPSVIYLIHNNVQFATLTYV) form a helical membrane-spanning segment. Residues 97–100 (DPST) lie on the Lumenal side of the membrane. A helical membrane pass occupies residues 101-120 (YQIMGNLKIVTTGILFRLVL). At 121-126 (KRKLSN) the chain is on the cytoplasmic side. A helical membrane pass occupies residues 127–144 (LQWMAVVLLAVGTTTSQV). Residues 145–157 (KGCGDAPCDSLFS) lie on the Lumenal side of the membrane. The helical transmembrane segment at 158–178 (APFQGYMLGILSACLSALAGV) threads the bilayer. At 179-198 (YTEYLMKKNNDSLYWQNVQL) the chain is on the cytoplasmic side. A helical transmembrane segment spans residues 199-219 (YTFGVIFNMGWLIYGDFKAGF). Residues 220–233 (ERGPWWQRLFNGYS) are Lumenal-facing. The chain crosses the membrane as a helical span at residues 234–254 (ITTWMVVFNLGSTGLLVSWLM). Over 255–262 (KYSDNIVK) the chain is Cytoplasmic. Residues 263–283 (VYSTSMGMLLTMVLSVYLFNV) form a helical membrane-spanning segment. Over 284-286 (RAT) the chain is Lumenal.

The protein belongs to the nucleotide-sugar transporter family. CMP-Sialate:CMP antiporter (TC 2.A.7.12) subfamily.

The protein localises to the golgi apparatus membrane. Sugar transporter involved in the transport of CMP-sialic acid from the cytoplasm into the Golgi. May transport important nucleotide sugars such as CMP-Kdo (2-keto-3-deoxy-D-manno-octulosonic acid) in physiological conditions. The polypeptide is CMP-sialic acid transporter 1 (Oryza sativa subsp. indica (Rice)).